The sequence spans 69 residues: uncharacterized protein (69 aa).

A disordered region spans residues 21–42 (MYAANKKSDARRRGKVGKEQWE). A coiled-coil region spans residues 35-69 (KVGKEQWEKEMEQYNIQKAQFEKELKEKKEKELKK).

This is an uncharacterized protein from Acheta domesticus (House cricket).